The chain runs to 625 residues: PTS system beta-glucoside-specific EIIBCA component (625 aa).

The region spanning methionine 1 to alanine 84 is the PTS EIIB type-1 domain. Residues methionine 1 to arginine 99 lie on the Periplasmic side of the membrane. The active-site Phosphocysteine intermediate; for EIIB activity is the cysteine 24. The helical transmembrane segment at phenylalanine 100–isoleucine 120 threads the bilayer. The PTS EIIC type-1 domain occupies tyrosine 102–glutamate 465. Topologically, residues leucine 121–threonine 140 are cytoplasmic. A helical membrane pass occupies residues tyrosine 141–tyrosine 161. At threonine 162 to arginine 166 the chain is on the periplasmic side. The helical transmembrane segment at phenylalanine 167–leucine 187 threads the bilayer. At threonine 188–aspartate 202 the chain is on the cytoplasmic side. A helical membrane pass occupies residues phenylalanine 203–serine 223. Residues alanine 224–asparagine 244 are Periplasmic-facing. Residues phenylalanine 245 to proline 265 traverse the membrane as a helical segment. Over leucine 266–alanine 284 the chain is Cytoplasmic. The helical transmembrane segment at valine 285 to leucine 305 threads the bilayer. Over histidine 306–threonine 324 the chain is Periplasmic. A helical transmembrane segment spans residues methionine 325–leucine 345. The Cytoplasmic segment spans residues cysteine 346 to lysine 353. Residues valine 354–glycine 374 form a helical membrane-spanning segment. The Periplasmic segment spans residues valine 375–lysine 380. A helical transmembrane segment spans residues tyrosine 381–glutamine 401. The Cytoplasmic segment spans residues threonine 402–lysine 403. Residues valine 404 to isoleucine 424 traverse the membrane as a helical segment. Residues aspartate 425–serine 431 are Periplasmic-facing. The helical transmembrane segment at valine 432–isoleucine 452 threads the bilayer. Topologically, residues threonine 453–arginine 625 are cytoplasmic. The 105-residue stretch at aspartate 495–asparagine 599 folds into the PTS EIIA type-1 domain. Histidine 547 acts as the Tele-phosphohistidine intermediate; for EIIA activity in catalysis.

It localises to the cell inner membrane. The phosphoenolpyruvate-dependent sugar phosphotransferase system (sugar PTS), a major carbohydrate active -transport system, catalyzes the phosphorylation of incoming sugar substrates concomitantly with their translocation across the cell membrane. This system is involved in beta-glucoside transport. In terms of biological role, acts both as a kinase and as a phosphatase on BglG. In Escherichia coli (strain K12), this protein is PTS system beta-glucoside-specific EIIBCA component (bglF).